Consider the following 269-residue polypeptide: Protein OPG079 (269 aa).

The protein belongs to the orthopoxvirus OPG079 family. Homoomultimer (Potential). Interacts with the small subunit of ribonucleotide reductase. Interacts with host FAM111A; this interaction protomtes OPG079 degradation through autophagy.

The protein resides in the host cytoplasm. Functionally, plays an essential role in viral DNA replication. Binds to ssDNA with high affinity and localizes to cytoplasmic factories where nascent viral genomes accumulate. May disrupt loops, hairpins and other secondary structures present on ssDNA to reduce and eliminate pausing of viral DNA polymerase at specific sites during elongation. This chain is Protein OPG079 (OPG079), found in Bos taurus (Bovine).